We begin with the raw amino-acid sequence, 484 residues long: Suppressor of fused homolog (484 aa).

The tract at residues 1-24 is disordered; sequence MAELRPSGAPGPTAPPAPGPTAPP. Positions 12–23 are enriched in pro residues; it reads PTAPPAPGPTAP. A Glycyl lysine isopeptide (Lys-Gly) (interchain with G-Cter in ubiquitin) cross-link involves residue lysine 257. The disordered stretch occupies residues 279–360; it reads SRPPEDDEDS…SSTAIIPHEL (82 aa). Serine 301 bears the Phosphoserine mark. An N6-acetyllysine modification is found at lysine 303. A Glycyl lysine isopeptide (Lys-Gly) (interchain with G-Cter in SUMO2) cross-link involves residue lysine 321. The segment covering 336–347 has biased composition (basic and acidic residues); sequence AHDRAPSRKDSL. Phosphoserine is present on residues serine 342, serine 346, and serine 352. Threonine 353 is modified (phosphothreonine). The residue at position 481 (serine 481) is a Phosphoserine.

This sequence belongs to the SUFU family. May form homodimers. Part of a DNA-bound corepressor complex containing SAP18, GLI1 and SIN3. Part of a complex containing CTNNB1. Binds BTRC, GLI2, GLI3, SAP18 and STK36. Binds both free and DNA-bound GLI1. Interacts with KIF7. Interacts with GLI3FL and this interaction regulates the formation of either repressor or activator forms of GLI3. Its association with GLI3FL is regulated by Hh signaling and dissociation of the SUFU-GLI3 interaction requires the presence of the ciliary motor KIF3A. Interacts with ULK3; inactivating the protein kinase activity of ULK3. Interacts with RAB23. In terms of processing, polyubiquitinated at Lys-257 by the SCF(FBXL17) complex, leading to its subsequent degradation and allowing the release of GLI1 for proper hedgehog/smoothened signal transduction. Ubiquitination is impaired by phosphorylation at Ser-342, Ser-346, Ser-352 and Thr-353. Phosphorylation at Ser-342, Ser-346, Ser-352 and Thr-353 prevents ubiquitination by the SCF(FBXL17) complex. Ubiquitous in adult tissues. Detected in osteoblasts of the perichondrium in the developing limb of 12-week old embryos. Isoform 1 is detected in fetal brain, lung, kidney and testis. Isoform 2 is detected in fetal testis, and at much lower levels in fetal brain, lung and kidney.

It localises to the cytoplasm. It is found in the nucleus. In terms of biological role, negative regulator in the hedgehog/smoothened signaling pathway. Down-regulates GLI1-mediated transactivation of target genes. Down-regulates GLI2-mediated transactivation of target genes. Part of a corepressor complex that acts on DNA-bound GLI1. May also act by linking GLI1 to BTRC and thereby targeting GLI1 to degradation by the proteasome. Sequesters GLI1, GLI2 and GLI3 in the cytoplasm, this effect is overcome by binding of STK36 to both SUFU and a GLI protein. Negative regulator of beta-catenin signaling. Regulates the formation of either the repressor form (GLI3R) or the activator form (GLI3A) of the full-length form of GLI3 (GLI3FL). GLI3FL is complexed with SUFU in the cytoplasm and is maintained in a neutral state. Without the Hh signal, the SUFU-GLI3 complex is recruited to cilia, leading to the efficient processing of GLI3FL into GLI3R. When Hh signaling is initiated, SUFU dissociates from GLI3FL and the latter translocates to the nucleus, where it is phosphorylated, destabilized, and converted to a transcriptional activator (GLI3A). Required for normal embryonic development. Required for the proper formation of hair follicles and the control of epidermal differentiation. This chain is Suppressor of fused homolog, found in Homo sapiens (Human).